We begin with the raw amino-acid sequence, 75 residues long: Small ribosomal subunit protein bS18 (75 aa).

The segment covering 1-11 (MAAKPFFRRRK) has biased composition (basic residues). A disordered region spans residues 1-21 (MAAKPFFRRRKTDPFEGENAP).

It belongs to the bacterial ribosomal protein bS18 family. As to quaternary structure, part of the 30S ribosomal subunit. Forms a tight heterodimer with protein bS6.

Functionally, binds as a heterodimer with protein bS6 to the central domain of the 16S rRNA, where it helps stabilize the platform of the 30S subunit. In Jannaschia sp. (strain CCS1), this protein is Small ribosomal subunit protein bS18.